A 248-amino-acid polypeptide reads, in one-letter code: uncharacterized protein (248 aa).

9–33 (IITGASSGIGEATAILLAEKGAKLV) provides a ligand contact to NADP(+). Residue Ser-141 coordinates substrate. Tyr-154 serves as the catalytic Proton acceptor.

This sequence belongs to the short-chain dehydrogenases/reductases (SDR) family.

This is an uncharacterized protein from Listeria innocua serovar 6a (strain ATCC BAA-680 / CLIP 11262).